Here is a 200-residue protein sequence, read N- to C-terminus: Protein GrpE (200 aa).

A compositionally biased stretch (basic and acidic residues) spans 1–12 (MSNEEIKNKDEQ). A disordered region spans residues 1 to 30 (MSNEEIKNKDEQLQQDAVETEAEVVGTDAD).

Belongs to the GrpE family. Homodimer.

The protein resides in the cytoplasm. Participates actively in the response to hyperosmotic and heat shock by preventing the aggregation of stress-denatured proteins, in association with DnaK and GrpE. It is the nucleotide exchange factor for DnaK and may function as a thermosensor. Unfolded proteins bind initially to DnaJ; upon interaction with the DnaJ-bound protein, DnaK hydrolyzes its bound ATP, resulting in the formation of a stable complex. GrpE releases ADP from DnaK; ATP binding to DnaK triggers the release of the substrate protein, thus completing the reaction cycle. Several rounds of ATP-dependent interactions between DnaJ, DnaK and GrpE are required for fully efficient folding. The chain is Protein GrpE from Vibrio cholerae serotype O1 (strain ATCC 39315 / El Tor Inaba N16961).